Consider the following 627-residue polypeptide: Plasmepsin IX (627 aa).

The Cytoplasmic portion of the chain corresponds to 1 to 13 (MFFINFKKIKKKQ). Residues 14–34 (FPIYLTQHRIITVFLIFIYFI) traverse the membrane as a helical; Signal-anchor for type II membrane protein segment. Over 35–627 (NLKDCFHINN…SSLHNKINNL (593 aa)) the chain is Lumenal. Positions 228–605 (YVGYIQIGTP…NNNSSYVGIA (378 aa)) constitute a Peptidase A1 domain. Active-site residues include D246 and D495.

Belongs to the peptidase A1 family. Post-translationally, autocleaved into a p55 mature form.

It is found in the membrane. The protein localises to the cytoplasmic vesicle. Its subcellular location is the secretory vesicle. It localises to the rhoptry. With respect to regulation, inhibited by small molecule 49c. Inhibited by small molecule WM382. During the asexual blood stage, initiates the proteolytic maturation of several rhoptry proteins and thus, is required for merozoite invasion of host erythrocytes and probably the subsequent development of the ring-stage. Cleaves rhoptry associated protein 1 RAP1 and apical sushi protein ASP during schizont maturation. Also cleaves rhoptry protein RON3. The chain is Plasmepsin IX from Plasmodium falciparum (isolate 3D7).